Consider the following 497-residue polypeptide: Reticulophagy regulator 1 (497 aa).

The disordered stretch occupies residues methionine 1–glutamate 51. The Cytoplasmic segment spans residues methionine 1 to glutamate 59. Residues glycine 13–alanine 23 are compositionally biased toward low complexity. The chain crosses the membrane as a helical span at residues alanine 60–glycine 80. Topologically, residues cysteine 81–serine 95 are lumenal. A reticulon homology domain region spans residues aspartate 84–phenylalanine 233. Residues leucine 96–valine 116 traverse the membrane as a helical segment. Residues tyrosine 117–histidine 118 are Cytoplasmic-facing. The helical transmembrane segment at leucine 119–serine 139 threads the bilayer. Residues arginine 140–threonine 208 are Lumenal-facing. A Phosphoserine modification is found at serine 149. Serine 151 carries the phosphoserine; by CAMK2B modification. Serine 153 bears the Phosphoserine mark. The helical transmembrane segment at isoleucine 209–leucine 229 threads the bilayer. Topologically, residues cysteine 230–histidine 497 are cytoplasmic. Over residues phenylalanine 319–aspartate 330 the composition is skewed to polar residues. 4 disordered regions span residues phenylalanine 319–leucine 365, lysine 377–leucine 396, leucine 436–phenylalanine 455, and serine 468–histidine 497. 2 stretches are compositionally biased toward basic and acidic residues: residues aspartate 334–serine 348 and lysine 377–lysine 388. Acidic residues predominate over residues proline 443–phenylalanine 455. An LIR motif motif is present at residues aspartate 453–leucine 458. The segment covering glycine 471–leucine 490 has biased composition (polar residues).

The protein belongs to the RETREG family. As to quaternary structure, homooligomer; oligomerization is enhanced following endoplasmic reticulum stress and is mediated by the reticulon homology domain. Interacts with ATG8 family modifier proteins MAP1LC3A, MAP1LC3B, MAP1LC3C, GABARAP, GABARAPL1 and GABARAPL2. Shows higher affinity for GABARAPL1 than for MAP1LC3A or MAP1LC3B. In terms of processing, phosphorylation at Ser-151 by CAMK2B enhances oligomerization and membrane scission and reticulophagy activity. As to expression, overexpressed in esophageal squamous cell carcinoma.

It localises to the golgi apparatus. The protein resides in the cis-Golgi network membrane. The protein localises to the endoplasmic reticulum membrane. Its function is as follows. Endoplasmic reticulum (ER)-anchored autophagy regulator which mediates ER delivery into lysosomes through sequestration into autophagosomes. Promotes membrane remodeling and ER scission via its membrane bending capacity and targets the fragments into autophagosomes via interaction with ATG8 family proteins. Active under basal conditions. Required for collagen quality control in a LIR motif-dependent manner. Required for long-term survival of nociceptive and autonomic ganglion neurons. In terms of biological role, (Microbial infection) During SARS-CoV-2 infection, RETREG1-mediated reticulophagy is promoted by SARS-CoV-2 ORF3A protein. This induces endoplasmic reticulum stress and inflammatory responses and facilitates viral infection. This chain is Reticulophagy regulator 1, found in Homo sapiens (Human).